A 245-amino-acid polypeptide reads, in one-letter code: uncharacterized protein (245 aa).

Residues 1–20 (MIKQTIVALLLSVGASSVFA) form the signal peptide.

This sequence to E.coli YmcB.

This is an uncharacterized protein from Escherichia coli (strain K12).